A 161-amino-acid chain; its full sequence is Nucleoside diphosphate kinase (161 aa).

ATP-binding residues include K13, F61, R89, T95, R106, and N116. H119 (pros-phosphohistidine intermediate) is an active-site residue.

The protein belongs to the NDK family. Mg(2+) serves as cofactor.

Its subcellular location is the cytoplasm. The enzyme catalyses a 2'-deoxyribonucleoside 5'-diphosphate + ATP = a 2'-deoxyribonucleoside 5'-triphosphate + ADP. It catalyses the reaction a ribonucleoside 5'-diphosphate + ATP = a ribonucleoside 5'-triphosphate + ADP. In terms of biological role, major role in the synthesis of nucleoside triphosphates other than ATP. The ATP gamma phosphate is transferred to the NDP beta phosphate via a ping-pong mechanism, using a phosphorylated active-site intermediate. The sequence is that of Nucleoside diphosphate kinase from Halobacterium salinarum (strain ATCC 29341 / DSM 671 / R1).